The sequence spans 389 residues: 2-deoxystreptamine N-acetyl-D-glucosaminyltransferase (389 aa).

The protein belongs to the glycosyltransferase group 1 family.

The enzyme catalyses 2-deoxystreptamine + UDP-N-acetyl-alpha-D-glucosamine = 2'-N-acetylparomamine + UDP + H(+). Its pathway is antibiotic biosynthesis; butirosin biosynthesis. Glycosyltransferase involved in the biosynthesis of butirosin by mediating conversion of 2-deoxystreptamine (2-DOS) to 2'-N-acetylparomamine using UDP-alpha-D-glucosamine as sugar donor. This chain is 2-deoxystreptamine N-acetyl-D-glucosaminyltransferase (btrM), found in Niallia circulans (Bacillus circulans).